A 183-amino-acid chain; its full sequence is ATP synthase subunit delta (183 aa).

It belongs to the ATPase delta chain family. F-type ATPases have 2 components, F(1) - the catalytic core - and F(0) - the membrane proton channel. F(1) has five subunits: alpha(3), beta(3), gamma(1), delta(1), epsilon(1). F(0) has three main subunits: a(1), b(2) and c(10-14). The alpha and beta chains form an alternating ring which encloses part of the gamma chain. F(1) is attached to F(0) by a central stalk formed by the gamma and epsilon chains, while a peripheral stalk is formed by the delta and b chains.

It localises to the cell inner membrane. Its function is as follows. F(1)F(0) ATP synthase produces ATP from ADP in the presence of a proton or sodium gradient. F-type ATPases consist of two structural domains, F(1) containing the extramembraneous catalytic core and F(0) containing the membrane proton channel, linked together by a central stalk and a peripheral stalk. During catalysis, ATP synthesis in the catalytic domain of F(1) is coupled via a rotary mechanism of the central stalk subunits to proton translocation. Functionally, this protein is part of the stalk that links CF(0) to CF(1). It either transmits conformational changes from CF(0) to CF(1) or is implicated in proton conduction. This is ATP synthase subunit delta from Desulforapulum autotrophicum (strain ATCC 43914 / DSM 3382 / VKM B-1955 / HRM2) (Desulfobacterium autotrophicum).